The chain runs to 348 residues: Phosphate acyltransferase (348 aa).

Belongs to the PlsX family. In terms of assembly, homodimer. Probably interacts with PlsY.

It is found in the cytoplasm. The catalysed reaction is a fatty acyl-[ACP] + phosphate = an acyl phosphate + holo-[ACP]. Its pathway is lipid metabolism; phospholipid metabolism. Functionally, catalyzes the reversible formation of acyl-phosphate (acyl-PO(4)) from acyl-[acyl-carrier-protein] (acyl-ACP). This enzyme utilizes acyl-ACP as fatty acyl donor, but not acyl-CoA. The sequence is that of Phosphate acyltransferase from Francisella tularensis subsp. tularensis (strain FSC 198).